The primary structure comprises 252 residues: ATP synthase subunit a (252 aa).

5 consecutive transmembrane segments (helical) span residues 33-53 (GQVF…ALAA), 92-112 (VPFV…GALV), 130-150 (DINT…YAGL), 196-216 (LVVG…VMAL), and 217-237 (GLFT…TYIG).

It belongs to the ATPase A chain family. F-type ATPases have 2 components, CF(1) - the catalytic core - and CF(0) - the membrane proton channel. CF(1) has five subunits: alpha(3), beta(3), gamma(1), delta(1), epsilon(1). CF(0) has three main subunits: a(1), b(2) and c(9-12). The alpha and beta chains form an alternating ring which encloses part of the gamma chain. CF(1) is attached to CF(0) by a central stalk formed by the gamma and epsilon chains, while a peripheral stalk is formed by the delta and b chains.

The protein localises to the cellular thylakoid membrane. Functionally, key component of the proton channel; it plays a direct role in the translocation of protons across the membrane. This Synechococcus sp. (strain PCC 6716) protein is ATP synthase subunit a.